A 203-amino-acid polypeptide reads, in one-letter code: uncharacterized protein (203 aa).

Residues 180 to 200 form a helical membrane-spanning segment; it reads VYLLLFGIPLLILIFLIIFFI.

Its subcellular location is the virion. The protein resides in the host membrane. This is an uncharacterized protein from Acanthamoeba polyphaga (Amoeba).